Reading from the N-terminus, the 500-residue chain is MSRSLTGALAHGFLGQSPLWYKAIICLFLVLNPLLLVTVGPVAAGWALVLEFIFTLGMALKCYPLMPGGLLLVEALLLQMTTPQALYEELQHNFPVILLLMFMVAGIHFMKELLLFLFSRILLGVRSKAILSLLFCVLSAFLSAFLDALTVTAVIISAAVGFYAVYHRVASGANPREDSALDSDQQVAQLHREDLDQFRAFLRSLLMHGAVGTALGGVCTLVGEPQNLLIGHEMGWHFADFFFKVAPVSLPVLGAGLLTCVLLEKLRLFGYGTLMPEPVRQVLAAYAAEDDAARTQAQRIALWVQGLAALILIICLGLHVAEVGLIGLMVIVLITAFTGITDEHRLGRAFQDAMPFTSLLVVFFAVVAVIHQQQLFSPLISWVLTLPTEQQPGMLYLANGLLSAISDNVFVATIYITEVKQAFLNGGMSREHFETLAVAINTGTNLPSVATPNGQAAFLFLLTSAIAPLIRLSYGRMVWMALPYTVVMGGLGWWAVTYWL.

13 helical membrane-spanning segments follow: residues histidine 11–leucine 31, leucine 34–phenylalanine 54, methionine 58–leucine 78, valine 96–phenylalanine 116, alanine 129–leucine 149, threonine 150–alanine 170, leucine 205–proline 225, phenylalanine 241–valine 261, isoleucine 311–isoleucine 331, phenylalanine 350–isoleucine 370, methionine 394–isoleucine 414, alanine 450–isoleucine 470, and methionine 477–threonine 497.

The protein belongs to the NhaB Na(+)/H(+) (TC 2.A.34) antiporter family.

The protein resides in the cell inner membrane. It catalyses the reaction 2 Na(+)(in) + 3 H(+)(out) = 2 Na(+)(out) + 3 H(+)(in). In terms of biological role, na(+)/H(+) antiporter that extrudes sodium in exchange for external protons. This chain is Na(+)/H(+) antiporter NhaB, found in Pseudomonas putida (strain GB-1).